The chain runs to 135 residues: MVLETISRIIKIQLPAYLKKLPLPETIGGFARLTVSEWLRLLPLLGILALLGYLTIRPFLPKKKKQKDSLINLKIQKENPKVVNEIDIEDLKRTNVCYCRCWRSKTFPVCDKSHIKHNELTGDNVGPLILKKKIL.

Topologically, residues 1–37 (MVLETISRIIKIQLPAYLKKLPLPETIGGFARLTVSE) are lumenal. A helical transmembrane segment spans residues 38–60 (WLRLLPLLGILALLGYLTIRPFL). Over 61-135 (PKKKKQKDSL…GPLILKKKIL (75 aa)) the chain is Cytoplasmic. [2Fe-2S] cluster-binding residues include cysteine 99, cysteine 101, cysteine 110, and histidine 114.

The protein belongs to the CISD protein family. CISD2 subfamily. Homodimer. The cofactor is [2Fe-2S] cluster.

The protein localises to the endoplasmic reticulum membrane. It is found in the mitochondrion outer membrane. Its function is as follows. Regulator of autophagy that contributes to antagonize becn1-mediated cellular autophagy at the endoplasmic reticulum. Participates in the interaction of bcl2 with becn1 and is required for bcl2-mediated depression of endoplasmic reticulum Ca(2+) stores during autophagy. This is CDGSH iron-sulfur domain-containing protein 2A (cisd2a) from Salmo salar (Atlantic salmon).